Reading from the N-terminus, the 678-residue chain is MAYKMHTKSFILHSDFSPSGDQPQAITQLIEGLENGLAHQTLLGVTGSGKTFTIANVIAKLNRPAMVLAPNKTLAAQLYAEMKAFFPENAVEYFVSYYDYYQPEAYVPSSDTFIEKDASINDQIEQMRLSATKSFLERRDTIVVASVSAIYGLGDPDSYLKMMLHLQTGAIINQRQILAQLAELQYTRNDQAFERGTFRVRGEIIDIFPAESDDKAIRIELFDDEIERLSLFDPLTGSSFGPVPRYTIYPKTHYVTPRERILNAIEKIKQELAERRQFLLENNKLLEEQRITQRTQFDIEMMNELGYCSGIENYSRYLSGRNEGEPPPTLFDYMPSDALLIIDESHVTVPQIGGMYRGDRSRKETLVEYGFRLPSALDNRPLRFEEFERLAPQTIYVSATPGPYELEKSGGEIIDQVVRPTGLLDPEIEIRPVAIQVDDLLSEARQRADQNERVLVTTLTKKMAEDLTDYLDEHGIRVRYLHSDIDTVERVEIIRDLRLGEFDVLVGINLLREGLDIPEVSLVAILDADKEGFLRSERSLIQTIGRAARNLKGKAILYADRITNSMQKAITETNRRREKQMKYNEARGIVPQALNKKVGELLDIGQGANQKAKANRNAKKVAEPTALYVVPQTAKEYQQQIKKLEQQMYKYAQDLEFEKAAAVRDQLQQLREHFFEVQ.

Residues 31 to 417 (EGLENGLAHQ…KSGGEIIDQV (387 aa)) form the Helicase ATP-binding domain. 44–51 (GVTGSGKT) contributes to the ATP binding site. The short motif at 97 to 120 (YYDYYQPEAYVPSSDTFIEKDASI) is the Beta-hairpin element. In terms of domain architecture, Helicase C-terminal spans 436 to 589 (QVDDLLSEAR…QMKYNEARGI (154 aa)). The UVR domain occupies 638–673 (QQQIKKLEQQMYKYAQDLEFEKAAAVRDQLQQLREH).

Belongs to the UvrB family. In terms of assembly, forms a heterotetramer with UvrA during the search for lesions. Interacts with UvrC in an incision complex.

The protein resides in the cytoplasm. Its function is as follows. The UvrABC repair system catalyzes the recognition and processing of DNA lesions. A damage recognition complex composed of 2 UvrA and 2 UvrB subunits scans DNA for abnormalities. Upon binding of the UvrA(2)B(2) complex to a putative damaged site, the DNA wraps around one UvrB monomer. DNA wrap is dependent on ATP binding by UvrB and probably causes local melting of the DNA helix, facilitating insertion of UvrB beta-hairpin between the DNA strands. Then UvrB probes one DNA strand for the presence of a lesion. If a lesion is found the UvrA subunits dissociate and the UvrB-DNA preincision complex is formed. This complex is subsequently bound by UvrC and the second UvrB is released. If no lesion is found, the DNA wraps around the other UvrB subunit that will check the other stand for damage. This Pasteurella multocida (strain Pm70) protein is UvrABC system protein B.